Consider the following 84-residue polypeptide: Acetylcholine receptor subunit alpha (84 aa).

Cysteine 7 and cysteine 21 are joined by a disulfide. Residues asparagine 20 and asparagine 66 are each glycosylated (N-linked (GlcNAc...) asparagine). A disulfide bridge links cysteine 71 with cysteine 72.

It belongs to the ligand-gated ion channel (TC 1.A.9) family. Acetylcholine receptor (TC 1.A.9.1) subfamily. Alpha-1/CHRNA1 sub-subfamily. As to quaternary structure, one of the alpha chains that assemble within the acetylcholine receptor, a pentamer of two alpha chains, a beta, a delta, and a gamma (in immature muscle) or epsilon (in mature muscle) chains. The muscle heteropentamer composed of alpha-1, beta-1, delta, epsilon subunits interacts with the alpha-conotoxin ImII.

Its subcellular location is the postsynaptic cell membrane. It is found in the cell membrane. The catalysed reaction is K(+)(in) = K(+)(out). It carries out the reaction Na(+)(in) = Na(+)(out). Its function is as follows. Upon acetylcholine binding, the AChR responds by an extensive change in conformation that affects all subunits and leads to opening of an ion-conducting channel across the plasma membrane. The sequence is that of Acetylcholine receptor subunit alpha (CHRNA1) from Herpestes ichneumon (Egyptian mongoose).